A 142-amino-acid chain; its full sequence is Large ribosomal subunit protein uL13 (142 aa).

It belongs to the universal ribosomal protein uL13 family. As to quaternary structure, part of the 50S ribosomal subunit.

Functionally, this protein is one of the early assembly proteins of the 50S ribosomal subunit, although it is not seen to bind rRNA by itself. It is important during the early stages of 50S assembly. The sequence is that of Large ribosomal subunit protein uL13 from Shewanella denitrificans (strain OS217 / ATCC BAA-1090 / DSM 15013).